A 169-amino-acid polypeptide reads, in one-letter code: Ribosome maturation factor RimM (169 aa).

Residues 95–168 form the PRC barrel domain; it reads EGNYYIFQIV…KMKVELLEGL (74 aa).

Belongs to the RimM family. As to quaternary structure, binds ribosomal protein uS19.

The protein localises to the cytoplasm. Its function is as follows. An accessory protein needed during the final step in the assembly of 30S ribosomal subunit, possibly for assembly of the head region. Essential for efficient processing of 16S rRNA. May be needed both before and after RbfA during the maturation of 16S rRNA. It has affinity for free ribosomal 30S subunits but not for 70S ribosomes. This Desulforamulus reducens (strain ATCC BAA-1160 / DSM 100696 / MI-1) (Desulfotomaculum reducens) protein is Ribosome maturation factor RimM.